Consider the following 167-residue polypeptide: Ribosome maturation factor RimM (167 aa).

In terms of domain architecture, PRC barrel spans 94–165 (EHEYYYSDII…TIKITPMEGL (72 aa)).

The protein belongs to the RimM family. As to quaternary structure, binds ribosomal protein uS19.

Its subcellular location is the cytoplasm. Functionally, an accessory protein needed during the final step in the assembly of 30S ribosomal subunit, possibly for assembly of the head region. Essential for efficient processing of 16S rRNA. May be needed both before and after RbfA during the maturation of 16S rRNA. It has affinity for free ribosomal 30S subunits but not for 70S ribosomes. This Staphylococcus epidermidis (strain ATCC 35984 / DSM 28319 / BCRC 17069 / CCUG 31568 / BM 3577 / RP62A) protein is Ribosome maturation factor RimM.